We begin with the raw amino-acid sequence, 258 residues long: Imidazole glycerol phosphate synthase subunit HisF (258 aa).

Residues D11 and D130 contribute to the active site.

The protein belongs to the HisA/HisF family. In terms of assembly, heterodimer of HisH and HisF.

The protein resides in the cytoplasm. It carries out the reaction 5-[(5-phospho-1-deoxy-D-ribulos-1-ylimino)methylamino]-1-(5-phospho-beta-D-ribosyl)imidazole-4-carboxamide + L-glutamine = D-erythro-1-(imidazol-4-yl)glycerol 3-phosphate + 5-amino-1-(5-phospho-beta-D-ribosyl)imidazole-4-carboxamide + L-glutamate + H(+). The protein operates within amino-acid biosynthesis; L-histidine biosynthesis; L-histidine from 5-phospho-alpha-D-ribose 1-diphosphate: step 5/9. IGPS catalyzes the conversion of PRFAR and glutamine to IGP, AICAR and glutamate. The HisF subunit catalyzes the cyclization activity that produces IGP and AICAR from PRFAR using the ammonia provided by the HisH subunit. This is Imidazole glycerol phosphate synthase subunit HisF from Escherichia coli O7:K1 (strain IAI39 / ExPEC).